A 37-amino-acid chain; its full sequence is Large ribosomal subunit protein bL36 (37 aa).

This sequence belongs to the bacterial ribosomal protein bL36 family.

The chain is Large ribosomal subunit protein bL36 from Colwellia psychrerythraea (strain 34H / ATCC BAA-681) (Vibrio psychroerythus).